The sequence spans 407 residues: Imidazolonepropionase (407 aa).

Fe(3+) contacts are provided by His-74 and His-76. 2 residues coordinate Zn(2+): His-74 and His-76. Arg-83, Tyr-146, and His-179 together coordinate 4-imidazolone-5-propanoate. Tyr-146 lines the N-formimidoyl-L-glutamate pocket. Fe(3+) is bound at residue His-244. His-244 provides a ligand contact to Zn(2+). A 4-imidazolone-5-propanoate-binding site is contributed by Gln-247. Position 319 (Asp-319) interacts with Fe(3+). Residue Asp-319 coordinates Zn(2+). N-formimidoyl-L-glutamate contacts are provided by Asn-321 and Gly-323. Thr-324 contributes to the 4-imidazolone-5-propanoate binding site.

This sequence belongs to the metallo-dependent hydrolases superfamily. HutI family. It depends on Zn(2+) as a cofactor. Fe(3+) is required as a cofactor.

The protein localises to the cytoplasm. The catalysed reaction is 4-imidazolone-5-propanoate + H2O = N-formimidoyl-L-glutamate. It participates in amino-acid degradation; L-histidine degradation into L-glutamate; N-formimidoyl-L-glutamate from L-histidine: step 3/3. Functionally, catalyzes the hydrolytic cleavage of the carbon-nitrogen bond in imidazolone-5-propanoate to yield N-formimidoyl-L-glutamate. It is the third step in the universal histidine degradation pathway. This is Imidazolonepropionase from Salmonella paratyphi C (strain RKS4594).